The chain runs to 88 residues: Putative membrane protein insertion efficiency factor (88 aa).

A disordered region spans residues 66–88 (DFVPPKKEKNADSEHSCKAHHHH). A compositionally biased stretch (basic and acidic residues) spans 69–82 (PPKKEKNADSEHSC).

Belongs to the UPF0161 family.

It is found in the cell membrane. Functionally, could be involved in insertion of integral membrane proteins into the membrane. The polypeptide is Putative membrane protein insertion efficiency factor (Listeria monocytogenes serotype 4b (strain CLIP80459)).